The following is a 92-amino-acid chain: Nodulation protein F (92 aa).

A Carrier domain is found at 4 to 88 (QLTVEIIAAI…DVVEAVRGLI (85 aa)). Residue Ser-45 is modified to O-(pantetheine 4'-phosphoryl)serine.

In terms of processing, 4'-phosphopantetheine is transferred from CoA to a specific serine of apo-NodF.

Functionally, proposed to synthesize nod factor fatty acyl chain. Involved in trans-2,trans-4,trans-6,cis-11-octadecatetraenoic acid biosynthesis. This is Nodulation protein F (nodF) from Rhizobium leguminosarum bv. trifolii.